Here is a 340-residue protein sequence, read N- to C-terminus: Putative pyridoxal kinase C18.10 (340 aa).

Positions 19 and 130 each coordinate substrate. Residues 189 to 190 (TS) and 218 to 230 (QFPS…TGTG) contribute to the ATP site. Asp-231 is a substrate binding site.

Belongs to the pyridoxine kinase family. Requires a divalent metal cation as cofactor.

Its subcellular location is the cytoplasm. The protein resides in the nucleus. The enzyme catalyses pyridoxal + ATP = pyridoxal 5'-phosphate + ADP + H(+). Required for synthesis of pyridoxal-5-phosphate from vitamin B6. The polypeptide is Putative pyridoxal kinase C18.10 (Schizosaccharomyces pombe (strain 972 / ATCC 24843) (Fission yeast)).